Here is a 247-residue protein sequence, read N- to C-terminus: Mast cell protease 2 (247 aa).

The N-terminal stretch at 1 to 19 (MHLLALHLLLFLLGSRAKA) is a signal peptide. The propeptide at 20–21 (GE) is activation peptide. The Peptidase S1 domain maps to 22–245 (IIGGTECKPH…YRPWINKILR (224 aa)). A disulfide bridge connects residues C51 and C67. The active-site Charge relay system is H66. Residue N80 is glycosylated (N-linked (GlcNAc...) asparagine). D110 serves as the catalytic Charge relay system. Disulfide bonds link C144/C209 and C175/C188. S203 (charge relay system) is an active-site residue.

It belongs to the peptidase S1 family. Granzyme subfamily.

The polypeptide is Mast cell protease 2 (Meriones unguiculatus (Mongolian jird)).